The sequence spans 356 residues: NADH-quinone oxidoreductase subunit H (356 aa).

The next 8 membrane-spanning stretches (helical) occupy residues 18 to 38, 87 to 107, 120 to 140, 166 to 186, 205 to 225, 265 to 285, 292 to 312, and 333 to 353; these read IIMI…IAYI, GVFL…WAVI, VGIL…IMAG, IGFV…SAVV, ILNW…VSAL, AITT…LPPI, WVPG…LIAM, and FLPL…FAGI.

This sequence belongs to the complex I subunit 1 family. In terms of assembly, NDH-1 is composed of 14 different subunits. Subunits NuoA, H, J, K, L, M, N constitute the membrane sector of the complex.

Its subcellular location is the cell inner membrane. It carries out the reaction a quinone + NADH + 5 H(+)(in) = a quinol + NAD(+) + 4 H(+)(out). NDH-1 shuttles electrons from NADH, via FMN and iron-sulfur (Fe-S) centers, to quinones in the respiratory chain. The immediate electron acceptor for the enzyme in this species is believed to be ubiquinone. Couples the redox reaction to proton translocation (for every two electrons transferred, four hydrogen ions are translocated across the cytoplasmic membrane), and thus conserves the redox energy in a proton gradient. This subunit may bind ubiquinone. The protein is NADH-quinone oxidoreductase subunit H of Bradyrhizobium sp. (strain ORS 278).